The sequence spans 677 residues: WD repeat-containing protein 43 (677 aa).

WD repeat units follow at residues 11-51, 57-119, 124-163, 166-205, 207-259, and 267-309; these read PLAP…LHQE, HLSG…LHSK, GHDN…VKCK, GDNS…RHFT, HATP…KEKS, and TDEP…YCKK. Position 77 is a phosphoserine (S77). K309 is covalently cross-linked (Glycyl lysine isopeptide (Lys-Gly) (interchain with G-Cter in SUMO1); alternate). K309 participates in a covalent cross-link: Glycyl lysine isopeptide (Lys-Gly) (interchain with G-Cter in SUMO2); alternate. T321 bears the Phosphothreonine mark. A Glycyl lysine isopeptide (Lys-Gly) (interchain with G-Cter in SUMO1); alternate cross-link involves residue K384. K384 participates in a covalent cross-link: Glycyl lysine isopeptide (Lys-Gly) (interchain with G-Cter in SUMO2); alternate. Phosphothreonine is present on T394. Residues S399, S431, S437, and S590 each carry the phosphoserine modification. Disordered regions lie at residues 414–445 and 582–677; these read AIKP…LGAM and SEKT…SEEE. The segment covering 582–592 has biased composition (polar residues); that stretch reads SEKTKGATSPG. The segment covering 600 to 652 has biased composition (acidic residues); it reads EEESSEEESDDEIADKDSEDNWDEDEEESESEKDEDVEEEDEDAEGKDEENGE. Residues 653 to 663 show a composition bias toward basic and acidic residues; that stretch reads DRDTASEKELN. A Phosphothreonine modification is found at T656. S658 carries the phosphoserine modification. Over residues 664–677 the composition is skewed to acidic residues; that stretch reads GDSDLDPENESEEE.

This sequence belongs to the UTP5 family. In terms of assembly, part of the small subunit (SSU) processome, composed of more than 70 proteins and the RNA chaperone small nucleolar RNA (snoRNA) U3. May be a component of the proposed t-UTP subcomplex of the ribosomal small subunit (SSU) processome containing at least UTP4, WDR43, HEATR1, UTP15, WDR75. Binds to RNA; binding is required for its chromatin association. Interacts with CDK9, DDX21 and SUPT6H. Interacts with RNA polymerase II. Interacts directly with UTP4 and UTP15.

It localises to the nucleus. The protein resides in the nucleolus. The protein localises to the nucleolus fibrillar center. It is found in the nucleoplasm. In terms of biological role, ribosome biogenesis factor that coordinates hyperactive transcription and ribogenesis. Part of the small subunit (SSU) processome, first precursor of the small eukaryotic ribosomal subunit. During the assembly of the SSU processome in the nucleolus, many ribosome biogenesis factors, an RNA chaperone and ribosomal proteins associate with the nascent pre-rRNA and work in concert to generate RNA folding, modifications, rearrangements and cleavage as well as targeted degradation of pre-ribosomal RNA by the RNA exosome. Involved in nucleolar processing of pre-18S ribosomal RNA. Required for optimal pre-ribosomal RNA transcription by RNA polymerase I. Essential for stem cell pluripotency and embryonic development. In the nucleoplasm, recruited by promoter-associated/nascent transcripts and transcription to active promoters where it facilitates releases of elongation factor P-TEFb and paused RNA polymerase II to allow transcription elongation and maintain high-level expression of its targets genes. This chain is WD repeat-containing protein 43, found in Homo sapiens (Human).